Consider the following 270-residue polypeptide: tRNA pseudouridine synthase A (270 aa).

Catalysis depends on D52, which acts as the Nucleophile. Residue Y110 participates in substrate binding.

The protein belongs to the tRNA pseudouridine synthase TruA family. Homodimer.

It carries out the reaction uridine(38/39/40) in tRNA = pseudouridine(38/39/40) in tRNA. Formation of pseudouridine at positions 38, 39 and 40 in the anticodon stem and loop of transfer RNAs. In Paraburkholderia phytofirmans (strain DSM 17436 / LMG 22146 / PsJN) (Burkholderia phytofirmans), this protein is tRNA pseudouridine synthase A.